Reading from the N-terminus, the 371-residue chain is Archaeal glycosylation protein Q (371 aa).

The interval 19 to 39 is disordered; it reads QRSDGSMPAGHNGPYHDPETP.

The protein localises to the cytoplasm. The protein operates within cell surface structure biogenesis; S-layer biogenesis. Its function is as follows. Putative isomerase involved in the N-glycosylation pathway. Required for the appearance of the methyl ester of hexuronic acid found at position four of the pentasaccharide N-linked to the S-layer glycoprotein. Either involved in preparing the third sugar for attachment of the fourth pentasaccharide subunit or processing the fourth sugar prior to its addition to the lipid-linked trisaccharide. The chain is Archaeal glycosylation protein Q (aglQ) from Haloferax volcanii (strain ATCC 29605 / DSM 3757 / JCM 8879 / NBRC 14742 / NCIMB 2012 / VKM B-1768 / DS2) (Halobacterium volcanii).